The following is a 625-amino-acid chain: tRNA uridine 5-carboxymethylaminomethyl modification enzyme MnmG (625 aa).

FAD contacts are provided by residues 10 to 15, Val122, and Ser177; that span reads GGGHAG. 271–285 lines the NAD(+) pocket; the sequence is GPRYCPSIEDKVNRF. Position 368 (Gln368) interacts with FAD.

This sequence belongs to the MnmG family. In terms of assembly, homodimer. Heterotetramer of two MnmE and two MnmG subunits. Requires FAD as cofactor.

The protein resides in the cytoplasm. Its function is as follows. NAD-binding protein involved in the addition of a carboxymethylaminomethyl (cmnm) group at the wobble position (U34) of certain tRNAs, forming tRNA-cmnm(5)s(2)U34. This chain is tRNA uridine 5-carboxymethylaminomethyl modification enzyme MnmG, found in Wolinella succinogenes (strain ATCC 29543 / DSM 1740 / CCUG 13145 / JCM 31913 / LMG 7466 / NCTC 11488 / FDC 602W) (Vibrio succinogenes).